The chain runs to 274 residues: Large ribosomal subunit protein uL2 (274 aa).

Positions 223 to 256 (VAMNPVDHPHGGGEGRTSGGRHPVTPWGIPTKGY) are disordered.

This sequence belongs to the universal ribosomal protein uL2 family. Part of the 50S ribosomal subunit. Forms a bridge to the 30S subunit in the 70S ribosome.

One of the primary rRNA binding proteins. Required for association of the 30S and 50S subunits to form the 70S ribosome, for tRNA binding and peptide bond formation. It has been suggested to have peptidyltransferase activity; this is somewhat controversial. Makes several contacts with the 16S rRNA in the 70S ribosome. The sequence is that of Large ribosomal subunit protein uL2 from Trichlorobacter lovleyi (strain ATCC BAA-1151 / DSM 17278 / SZ) (Geobacter lovleyi).